Reading from the N-terminus, the 193-residue chain is Imidazoleglycerol-phosphate dehydratase (193 aa).

It belongs to the imidazoleglycerol-phosphate dehydratase family.

Its subcellular location is the cytoplasm. It catalyses the reaction D-erythro-1-(imidazol-4-yl)glycerol 3-phosphate = 3-(imidazol-4-yl)-2-oxopropyl phosphate + H2O. It functions in the pathway amino-acid biosynthesis; L-histidine biosynthesis; L-histidine from 5-phospho-alpha-D-ribose 1-diphosphate: step 6/9. The chain is Imidazoleglycerol-phosphate dehydratase from Methanoculleus marisnigri (strain ATCC 35101 / DSM 1498 / JR1).